Here is a 987-residue protein sequence, read N- to C-terminus: Sarcosine oxidase subunit alpha (987 aa).

The NAD(+) site is built by Asp-198, Glu-199, Ser-206, Ala-244, and Gly-445. 2 residues coordinate (6R)-5,10-methylene-5,6,7,8-tetrahydrofolate: Thr-714 and Glu-806.

The protein belongs to the GcvT family. As to quaternary structure, heterotetramer composed of subunits alpha (SoxA), beta (SoxB), gamma (SoxG) and delta (SoxD). It depends on NAD(+) as a cofactor.

The protein localises to the cytoplasm. It carries out the reaction sarcosine + (6S)-5,6,7,8-tetrahydrofolate + O2 = (6R)-5,10-methylene-5,6,7,8-tetrahydrofolate + glycine + H2O2. It catalyses the reaction sarcosine + O2 + H2O = formaldehyde + glycine + H2O2. In terms of biological role, in the presence of tetrahydrofolate, catalyzes the oxidative demethylation of sarcosine to yield glycine, 5,10-methylenetetrahydrofolate and hydrogen peroxide. In the absence of tetrahydrofolate, catalyzes the oxidative demethylation of sarcosine to yield glycine, formaldehyde and hydrogen peroxide. The sequence is that of Sarcosine oxidase subunit alpha (soxA) from Rhizobium meliloti (strain 1021) (Ensifer meliloti).